Here is a 61-residue protein sequence, read N- to C-terminus: Photosystem II reaction center protein K (61 aa).

The propeptide occupies 1-24; it reads MPNILSLTCICFNSVLYPTSFFFA. A helical transmembrane segment spans residues 32–52; sequence IFNPIVDIMPVIPLFFFLLAF.

The protein belongs to the PsbK family. As to quaternary structure, PSII is composed of 1 copy each of membrane proteins PsbA, PsbB, PsbC, PsbD, PsbE, PsbF, PsbH, PsbI, PsbJ, PsbK, PsbL, PsbM, PsbT, PsbX, PsbY, PsbZ, Psb30/Ycf12, at least 3 peripheral proteins of the oxygen-evolving complex and a large number of cofactors. It forms dimeric complexes. Detected in both etioplasts and green leaves; PSII is only assembled in green leaves.

The protein resides in the plastid. It localises to the chloroplast thylakoid membrane. In terms of biological role, one of the components of the core complex of photosystem II (PSII). PSII is a light-driven water:plastoquinone oxidoreductase that uses light energy to abstract electrons from H(2)O, generating O(2) and a proton gradient subsequently used for ATP formation. It consists of a core antenna complex that captures photons, and an electron transfer chain that converts photonic excitation into a charge separation. The chain is Photosystem II reaction center protein K from Hordeum vulgare (Barley).